The chain runs to 127 residues: Small ribosomal subunit protein uS13 (127 aa).

The tract at residues 93–127 (RRGMPVRGQRTRTNARTRRGRRGQAIGIKKKATKK) is disordered.

The protein belongs to the universal ribosomal protein uS13 family. Part of the 30S ribosomal subunit. Forms a loose heterodimer with protein S19. Forms two bridges to the 50S subunit in the 70S ribosome.

Its function is as follows. Located at the top of the head of the 30S subunit, it contacts several helices of the 16S rRNA. In the 70S ribosome it contacts the 23S rRNA (bridge B1a) and protein L5 of the 50S subunit (bridge B1b), connecting the 2 subunits; these bridges are implicated in subunit movement. Contacts the tRNAs in the A and P-sites. The sequence is that of Small ribosomal subunit protein uS13 from Chloroflexus aurantiacus (strain ATCC 29366 / DSM 635 / J-10-fl).